Here is a 778-residue protein sequence, read N- to C-terminus: Endonuclease MutS2 (778 aa).

Residue 328 to 335 (GPNTGGKT) coordinates ATP. Positions 702–777 (LDLRGKRYEE…GSGATIVTFK (76 aa)) constitute a Smr domain.

The protein belongs to the DNA mismatch repair MutS family. MutS2 subfamily. In terms of assembly, homodimer. Binds to stalled ribosomes, contacting rRNA.

In terms of biological role, endonuclease that is involved in the suppression of homologous recombination and thus may have a key role in the control of bacterial genetic diversity. Acts as a ribosome collision sensor, splitting the ribosome into its 2 subunits. Detects stalled/collided 70S ribosomes which it binds and splits by an ATP-hydrolysis driven conformational change. Acts upstream of the ribosome quality control system (RQC), a ribosome-associated complex that mediates the extraction of incompletely synthesized nascent chains from stalled ribosomes and their subsequent degradation. Probably generates substrates for RQC. This chain is Endonuclease MutS2, found in Streptococcus pneumoniae (strain Hungary19A-6).